The chain runs to 113 residues: uncharacterized protein (113 aa).

The N-terminal stretch at 1–19 (MLSPLSPRIIAAFTTAVGA) is a signal peptide.

The protein to M.tuberculosis Rv1291c.

This is an uncharacterized protein from Mycobacterium tuberculosis (strain CDC 1551 / Oshkosh).